The primary structure comprises 340 residues: MGPPHSGPGGVRVGALLLLGVLGLVSGLSLEPVYWNSANKRFQAEGGYVLYPQIGDRLDLLCPRARPPGPHSSPNYEFYKLYLVGGAQGRRCEAPPAPNLLLTCDRPDLDLRFTIKFQEYSPNLWGHEFRSHHDYYIIATSDGTREGLESLQGGVCLTRGMKVLLRVGQSPRGGAVPRKPVSEMPMERDRGAAHSLEPGKENLPGDPTSNATSRGAEGPLPPPSMPAVAGAAGGLALLLLGVAGAGGAMCWRRRRAKPSESRHPGPGSFGRGGSLGLGGGGGMGPREAEPGELGIALRGGGAADPPFCPHYEKVSGDYGHPVYIVQDGPPQSPPNIYYKV.

A signal peptide spans 1-27 (MGPPHSGPGGVRVGALLLLGVLGLVSG). The Ephrin RBD domain maps to 28 to 167 (LSLEPVYWNS…TRGMKVLLRV (140 aa)). Residues 28–226 (LSLEPVYWNS…EGPLPPPSMP (199 aa)) lie on the Extracellular side of the membrane. 2 disulfides stabilise this stretch: Cys62–Cys104 and Cys92–Cys156. Residues 168–225 (GQSPRGGAVPRKPVSEMPMERDRGAAHSLEPGKENLPGDPTSNATSRGAEGPLPPPSM) are disordered. Basic and acidic residues predominate over residues 185–200 (PMERDRGAAHSLEPGK). N-linked (GlcNAc...) asparagine glycosylation occurs at Asn210. Residues 227–247 (AVAGAAGGLALLLLGVAGAGG) traverse the membrane as a helical segment. The Cytoplasmic segment spans residues 248–340 (AMCWRRRRAK…QSPPNIYYKV (93 aa)). The disordered stretch occupies residues 254–298 (RRAKPSESRHPGPGSFGRGGSLGLGGGGGMGPREAEPGELGIALR). The span at 267 to 284 (GSFGRGGSLGLGGGGGMG) shows a compositional bias: gly residues. Arg271 is subject to Omega-N-methylarginine. Position 274 is a phosphoserine (Ser274). The PDZ-binding signature appears at 338 to 340 (YKV).

Belongs to the ephrin family. Interacts with GRIP1 and GRIP2. As to quaternary structure, (Microbial infection) Interacts with nipah virus and hendra virus glycoprotein. In terms of tissue distribution, highly expressed in brain; expressed in embryonic floor plate, roof plate and hindbrain segments.

It is found in the membrane. In terms of biological role, cell surface transmembrane ligand for Eph receptors, a family of receptor tyrosine kinases which are crucial for migration, repulsion and adhesion during neuronal, vascular and epithelial development. Binds promiscuously Eph receptors residing on adjacent cells, leading to contact-dependent bidirectional signaling into neighboring cells. The signaling pathway downstream of the receptor is referred to as forward signaling while the signaling pathway downstream of the ephrin ligand is referred to as reverse signaling. May play a pivotal role in forebrain function. Binds to, and induce the collapse of, commissural axons/growth cones in vitro. May play a role in constraining the orientation of longitudinally projecting axons. (Microbial infection) Acts as a receptor for nipah virus and hendra virus. The sequence is that of Ephrin-B3 (EFNB3) from Homo sapiens (Human).